Reading from the N-terminus, the 231-residue chain is Ureidoacrylate amidohydrolase RutB (231 aa).

The active-site Proton acceptor is Asp25. The active site involves Lys134. The active-site Nucleophile is Cys167.

The protein belongs to the isochorismatase family. RutB subfamily.

The catalysed reaction is (Z)-3-ureidoacrylate + H2O + H(+) = (Z)-3-aminoacrylate + NH4(+) + CO2. It carries out the reaction (Z)-3-ureidoacrylate + H2O = (Z)-3-aminoacrylate + carbamate + H(+). The enzyme catalyses (Z)-2-methylureidoacrylate + H2O + H(+) = (Z)-2-methylaminoacrylate + NH4(+) + CO2. Hydrolyzes ureidoacrylate to form aminoacrylate and carbamate. The carbamate hydrolyzes spontaneously, thereby releasing one of the nitrogen atoms of the pyrimidine ring as ammonia and one of its carbon atoms as CO2. The protein is Ureidoacrylate amidohydrolase RutB of Escherichia coli O18:K1:H7 (strain IHE3034 / ExPEC).